Reading from the N-terminus, the 92-residue chain is RNA-binding protein Hfq (92 aa).

The 61-residue stretch at 11 to 71 folds into the Sm domain; that stretch reads DRFLNHLRVN…ISTIIPSSYV (61 aa).

It belongs to the Hfq family. Homohexamer.

RNA chaperone that binds small regulatory RNA (sRNAs) and mRNAs to facilitate mRNA translational regulation in response to envelope stress, environmental stress and changes in metabolite concentrations. Also binds with high specificity to tRNAs. The polypeptide is RNA-binding protein Hfq (Thermotoga maritima (strain ATCC 43589 / DSM 3109 / JCM 10099 / NBRC 100826 / MSB8)).